We begin with the raw amino-acid sequence, 256 residues long: Thiazole synthase (256 aa).

Lys-96 acts as the Schiff-base intermediate with DXP in catalysis. 1-deoxy-D-xylulose 5-phosphate contacts are provided by residues Gly-157, 183-184, and 205-206; these read AG and NT.

Belongs to the ThiG family. In terms of assembly, homotetramer. Forms heterodimers with either ThiH or ThiS.

Its subcellular location is the cytoplasm. It carries out the reaction [ThiS sulfur-carrier protein]-C-terminal-Gly-aminoethanethioate + 2-iminoacetate + 1-deoxy-D-xylulose 5-phosphate = [ThiS sulfur-carrier protein]-C-terminal Gly-Gly + 2-[(2R,5Z)-2-carboxy-4-methylthiazol-5(2H)-ylidene]ethyl phosphate + 2 H2O + H(+). It participates in cofactor biosynthesis; thiamine diphosphate biosynthesis. In terms of biological role, catalyzes the rearrangement of 1-deoxy-D-xylulose 5-phosphate (DXP) to produce the thiazole phosphate moiety of thiamine. Sulfur is provided by the thiocarboxylate moiety of the carrier protein ThiS. In vitro, sulfur can be provided by H(2)S. This is Thiazole synthase from Clostridioides difficile (strain 630) (Peptoclostridium difficile).